We begin with the raw amino-acid sequence, 257 residues long: Imidazole glycerol phosphate synthase subunit HisF (257 aa).

Active-site residues include Asp11 and Asp130.

It belongs to the HisA/HisF family. Heterodimer of HisH and HisF.

It is found in the cytoplasm. The enzyme catalyses 5-[(5-phospho-1-deoxy-D-ribulos-1-ylimino)methylamino]-1-(5-phospho-beta-D-ribosyl)imidazole-4-carboxamide + L-glutamine = D-erythro-1-(imidazol-4-yl)glycerol 3-phosphate + 5-amino-1-(5-phospho-beta-D-ribosyl)imidazole-4-carboxamide + L-glutamate + H(+). It functions in the pathway amino-acid biosynthesis; L-histidine biosynthesis; L-histidine from 5-phospho-alpha-D-ribose 1-diphosphate: step 5/9. In terms of biological role, IGPS catalyzes the conversion of PRFAR and glutamine to IGP, AICAR and glutamate. The HisF subunit catalyzes the cyclization activity that produces IGP and AICAR from PRFAR using the ammonia provided by the HisH subunit. This is Imidazole glycerol phosphate synthase subunit HisF from Shewanella halifaxensis (strain HAW-EB4).